An 808-amino-acid polypeptide reads, in one-letter code: Probable ATP-dependent helicase MJ1401 (808 aa).

A Q motif motif is present at residues Y189–T217. One can recognise a Helicase ATP-binding domain in the interval K221–N391. ATP is bound at residue S234–T241. The short motif at D336–H339 is the DEIH box element. The 190-residue stretch at P396–A585 folds into the Helicase C-terminal domain.

The protein belongs to the DEAD box helicase family.

The polypeptide is Probable ATP-dependent helicase MJ1401 (Methanocaldococcus jannaschii (strain ATCC 43067 / DSM 2661 / JAL-1 / JCM 10045 / NBRC 100440) (Methanococcus jannaschii)).